The chain runs to 229 residues: MKRTQNINQETFRKSWRSYRLAPVALAISAVFMLAGCEKTDETVSLYQNADDCSAANPSKSAECTTAYNTALQEAAKTAPKYATREDCVAEFGESQCTQAPAQAGMVPTSSSSSETTAAAPQQSGSMWMPLMAGYMMGRMMGGGASQPLFTSKAPNSPANGKFVDATGKNFGSATTGRTMTVPRTAMAPKPAVTNTITRGGFGESVAKQSSMQRSAATSSKTSTRSMGG.

2 disordered regions span residues Pro101–Gly125 and Lys190–Gly229. Low complexity-rich tracts occupy residues Thr109–Ala120 and Arg214–Gly229.

It belongs to the UPF0441 family.

In Yersinia enterocolitica serotype O:8 / biotype 1B (strain NCTC 13174 / 8081), this protein is UPF0441 protein YE3666.